A 154-amino-acid polypeptide reads, in one-letter code: Nuclear cap-binding protein subunit 2 (154 aa).

The interval 1–23 is disordered; that stretch reads MTASVDLSSYRDQHFKGSRSEQE. A compositionally biased stretch (basic and acidic residues) spans 9–23; that stretch reads SYRDQHFKGSRSEQE. MRNA is bound by residues Tyr10, Tyr33, 102–106, 113–117, and 123–124; these read RVDWD, RQYGR, and QV. Residues 30-108 enclose the RRM domain; that stretch reads TTLYVGNLSF…RLIRVDWDAG (79 aa).

It belongs to the RRM NCBP2 family. In terms of assembly, component of the nuclear cap-binding complex (CBC), a heterodimer composed of Cbp80 and Cbp20 that interacts with m7GpppG-capped RNA. Interacts with Ars2.

The protein resides in the nucleus. Its function is as follows. Component of the cap-binding complex (CBC), which binds co-transcriptionally to the 5' cap of pre-mRNAs and is involved in various processes such as pre-mRNA splicing and RNA-mediated gene silencing (RNAi). The CBC complex is involved in miRNA-mediated RNA interference via its interaction with Ars2 and is required for primary microRNAs (miRNAs) processing. Also involved in innate immunity via the short interfering RNAs (siRNAs) processing machinery by restricting the viral RNA production. In the CBC complex, Cbp20 recognizes and binds capped RNAs (m7GpppG-capped RNA) but requires Cbp80 to stabilize the movement of its N-terminal loop and lock the CBC into a high affinity cap-binding state with the cap structure. The polypeptide is Nuclear cap-binding protein subunit 2 (Cbp20) (Drosophila grimshawi (Hawaiian fruit fly)).